Consider the following 309-residue polypeptide: Homoserine O-acetyltransferase (309 aa).

Residue Cys-148 is the Acyl-thioester intermediate of the active site. The substrate site is built by Lys-169 and Ser-198. His-241 functions as the Proton acceptor in the catalytic mechanism. Glu-243 is a catalytic residue. A substrate-binding site is contributed by Arg-255.

Belongs to the MetA family.

The protein resides in the cytoplasm. The catalysed reaction is L-homoserine + acetyl-CoA = O-acetyl-L-homoserine + CoA. It functions in the pathway amino-acid biosynthesis; L-methionine biosynthesis via de novo pathway; O-acetyl-L-homoserine from L-homoserine: step 1/1. Functionally, transfers an acetyl group from acetyl-CoA to L-homoserine, forming acetyl-L-homoserine. In vitro, can also use propionyl-CoA as acyl donor. The chain is Homoserine O-acetyltransferase from Shouchella clausii (Alkalihalobacillus clausii).